The sequence spans 126 residues: MPEPAKSAPAPKKGSKKAVTKTQKKGDKKRKKSRKESYSIYVYKVLKQVHPDTGISSKAMGIMNSFVNDIFERIAGEASRLAHYNKRSTITSREIQTAVRSLLPGELAKHAVSEGTKAVTKYTSSK.

The span at 1–12 shows a compositional bias: low complexity; sequence MPEPAKSAPAPK. The disordered stretch occupies residues 1–36; it reads MPEPAKSAPAPKKGSKKAVTKTQKKGDKKRKKSRKE. N6-acetyllysine is present on residues Lys-6 and Lys-13. Over residues 13–34 the composition is skewed to basic residues; it reads KGSKKAVTKTQKKGDKKRKKSR. At Ser-15 the chain carries Phosphoserine. 2 positions are modified to N6-acetyllysine: Lys-16 and Lys-21. A Glycyl lysine isopeptide (Lys-Gly) (interchain with G-Cter in ubiquitin) cross-link involves residue Lys-121.

Belongs to the histone H2B family. As to quaternary structure, the nucleosome is a histone octamer containing two molecules each of H2A, H2B, H3 and H4 assembled in one H3-H4 heterotetramer and two H2A-H2B heterodimers. The octamer wraps approximately 147 bp of DNA. Post-translationally, monoubiquitination of Lys-121 by the RNF20/40 complex gives a specific tag for epigenetic transcriptional activation and is also prerequisite for histone H3 'Lys-4' and 'Lys-79' methylation. In terms of processing, phosphorylated on Ser-15 during apoptosis; which facilitates apoptotic chromatin condensation.

The protein localises to the nucleus. It localises to the chromosome. Functionally, core component of nucleosome. Nucleosomes wrap and compact DNA into chromatin, limiting DNA accessibility to the cellular machineries which require DNA as a template. Histones thereby play a central role in transcription regulation, DNA repair, DNA replication and chromosomal stability. DNA accessibility is regulated via a complex set of post-translational modifications of histones, also called histone code, and nucleosome remodeling. The chain is Histone H2B from Cairina moschata (Muscovy duck).